We begin with the raw amino-acid sequence, 504 residues long: L-amino-acid oxidase (504 aa).

The N-terminal stretch at methionine 1–cysteine 18 is a signal peptide. The cysteines at positions 28 and 191 are disulfide-linked. Residues methionine 61–serine 62, glutamate 81–alanine 82, arginine 89, and glycine 105–arginine 108 each bind FAD. A substrate-binding site is contributed by arginine 108. Asparagine 190 carries an N-linked (GlcNAc...) asparagine glycan. Histidine 241 is a binding site for substrate. Valine 279 lines the FAD pocket. A disulfide bond links cysteine 349 and cysteine 430. An N-linked (GlcNAc...) asparagine glycan is attached at asparagine 379. Tyrosine 390 contributes to the substrate binding site. FAD-binding positions include glutamate 475 and glycine 482–threonine 487. Glycine 482–tryptophan 483 serves as a coordination point for substrate.

It belongs to the flavin monoamine oxidase family. FIG1 subfamily. As to quaternary structure, homodimer; non-covalently linked. Requires FAD as cofactor. In terms of tissue distribution, expressed by the venom gland.

It localises to the secreted. The enzyme catalyses an L-alpha-amino acid + O2 + H2O = a 2-oxocarboxylate + H2O2 + NH4(+). It carries out the reaction L-leucine + O2 + H2O = 4-methyl-2-oxopentanoate + H2O2 + NH4(+). It catalyses the reaction L-phenylalanine + O2 + H2O = 3-phenylpyruvate + H2O2 + NH4(+). The catalysed reaction is L-tryptophan + O2 + H2O = indole-3-pyruvate + H2O2 + NH4(+). The enzyme catalyses L-methionine + O2 + H2O = 4-methylsulfanyl-2-oxobutanoate + H2O2 + NH4(+). It carries out the reaction L-tyrosine + O2 + H2O = 3-(4-hydroxyphenyl)pyruvate + H2O2 + NH4(+). In terms of biological role, catalyzes an oxidative deamination of predominantly hydrophobic and aromatic L-amino acids, thus producing hydrogen peroxide that may contribute to the diverse toxic effects of this enzyme. Is highly active on L-Tyr followed by L-Phe, L-Met, L-Leu, L-Trp, and weakly active on L-Ile, L-Arg, L-Val, L-Lys, and L-Ala. Inhibits ADP- and collagen-induced platelet aggregation. This inhibition is inhibited by catalase, indicating the importance of generated H(2)O(2) for the inhibitory effect. This effect on platelets among snake L-amino-acid oxidases is however controversial, since some of them induce aggregation, whereas the other inhibit agonist-induced aggregation. In vivo, this enzyme induces a rapid, substantial and reversible increase in the paw volume of mice (edema). In addition, myofibrosis, and inflammatory cell infiltration on the paw tissue are also observed. This chain is L-amino-acid oxidase, found in Daboia russelii (Russel's viper).